A 581-amino-acid polypeptide reads, in one-letter code: Putative ABC transporter ATP-binding protein MM_1996 (581 aa).

The ABC transporter 1 domain maps to 10–250 (IEIRDLWYTY…LEVFHRLGLR (241 aa)). Position 44-51 (44-51 (GPTGCGKS)) interacts with ATP. Positions 287-309 (GDYPASPGRKEKTSSPGWSSENN) are disordered. Positions 300–309 (SSPGWSSENN) are enriched in polar residues. In terms of domain architecture, ABC transporter 2 spans 313–541 (VSVRDLWSGY…IDILRKASLT (229 aa)). 346-353 (GTNGSGKS) is a binding site for ATP.

This sequence belongs to the ABC transporter superfamily.

Its subcellular location is the cell membrane. Probably part of an ABC transporter complex. Responsible for energy coupling to the transport system. In Methanosarcina mazei (strain ATCC BAA-159 / DSM 3647 / Goe1 / Go1 / JCM 11833 / OCM 88) (Methanosarcina frisia), this protein is Putative ABC transporter ATP-binding protein MM_1996.